The primary structure comprises 417 residues: Pre-mRNA-splicing factor RBM22 (417 aa).

The C3H1-type zinc-finger motif lies at 159–186 (RNRPHICSFWVKGECKRGEECPYRHEKP). Residues 232–305 (TTLYVGGLGD…RRLNVKWGRS (74 aa)) form the RRM domain. 2 disordered regions span residues 303 to 348 (GRSQ…SANY) and 369 to 417 (GLSG…PSSG). Positions 309 to 318 (RGKEREHDGS) are enriched in basic and acidic residues. Residues 369–391 (GLSGPPPGFGPHMFPPMAPPPFL) are compositionally biased toward pro residues.

This sequence belongs to the SLT11 family. Component of the pre-catalytic and catalytic spliceosome complexes. Component of the postcatalytic spliceosome P complex.

The protein localises to the nucleus. Its subcellular location is the cytoplasm. Its function is as follows. Required for pre-mRNA splicing as component of the activated spliceosome. Involved in the first step of pre-mRNA splicing. Binds directly to the internal stem-loop (ISL) domain of the U6 snRNA and to the pre-mRNA intron near the 5' splice site during the activation and catalytic phases of the spliceosome cycle. The sequence is that of Pre-mRNA-splicing factor RBM22 (rbm22) from Xenopus laevis (African clawed frog).